A 360-amino-acid chain; its full sequence is Alkanal monooxygenase alpha chain (360 aa).

Belongs to the bacterial luciferase oxidoreductase family. In terms of assembly, heterodimer of an alpha and a beta chain.

The catalysed reaction is a long-chain fatty aldehyde + FMNH2 + O2 = a long-chain fatty acid + hnu + FMN + H2O + 2 H(+). Functionally, light-emitting reaction in luminous bacteria. The polypeptide is Alkanal monooxygenase alpha chain (luxA) (Photorhabdus luminescens (Xenorhabdus luminescens)).